Consider the following 143-residue polypeptide: NADH-quinone oxidoreductase subunit A (143 aa).

Helical transmembrane passes span 12 to 32 (YIVGSVFLCVFMLLCGYFLGG), 61 to 81 (FYLIAMIFVIFDVEGIYLYIW), and 90 to 110 (WIGFIEVCIFVFILLISLIYA).

It belongs to the complex I subunit 3 family. As to quaternary structure, NDH-1 is composed of 13 different subunits. Subunits NuoA, H, J, K, L, M, N constitute the membrane sector of the complex.

The protein localises to the cell inner membrane. The catalysed reaction is a quinone + NADH + 5 H(+)(in) = a quinol + NAD(+) + 4 H(+)(out). Functionally, NDH-1 shuttles electrons from NADH, via FMN and iron-sulfur (Fe-S) centers, to quinones in the respiratory chain. The immediate electron acceptor for the enzyme in this species is believed to be ubiquinone. Couples the redox reaction to proton translocation (for every two electrons transferred, four hydrogen ions are translocated across the cytoplasmic membrane), and thus conserves the redox energy in a proton gradient. The sequence is that of NADH-quinone oxidoreductase subunit A from Blochmanniella floridana.